The chain runs to 710 residues: DNA polymerase epsilon subunit B (710 aa).

The segment at 116–167 is disordered; sequence FLKRPNSPTDTEITTLSQGSATSVVNPDSHSPMMLEEGSPINSDSEPISEHE. Polar residues predominate over residues 121-144; the sequence is NSPTDTEITTLSQGSATSVVNPDS.

It belongs to the DNA polymerase epsilon subunit B family. As to quaternary structure, heterotetramer. Consists of four subunits: POL2, DPB2, DPB3 and DPB4.

It is found in the nucleus. In terms of biological role, as accessory component of the DNA polymerase epsilon (DNA polymerase II) participates in chromosomal DNA replication. The protein is DNA polymerase epsilon subunit B (DPB2) of Kluyveromyces lactis (strain ATCC 8585 / CBS 2359 / DSM 70799 / NBRC 1267 / NRRL Y-1140 / WM37) (Yeast).